Reading from the N-terminus, the 352-residue chain is tRNA(Ile)-lysidine synthase (352 aa).

Residue 58 to 63 (SGGADS) coordinates ATP.

This sequence belongs to the tRNA(Ile)-lysidine synthase family.

The protein localises to the cytoplasm. It catalyses the reaction cytidine(34) in tRNA(Ile2) + L-lysine + ATP = lysidine(34) in tRNA(Ile2) + AMP + diphosphate + H(+). Functionally, ligates lysine onto the cytidine present at position 34 of the AUA codon-specific tRNA(Ile) that contains the anticodon CAU, in an ATP-dependent manner. Cytidine is converted to lysidine, thus changing the amino acid specificity of the tRNA from methionine to isoleucine. This Streptomyces coelicolor (strain ATCC BAA-471 / A3(2) / M145) protein is tRNA(Ile)-lysidine synthase.